Consider the following 420-residue polypeptide: MTNNQNELGDVMDVLEDNIGYLTDRDREIPETDVAVIKYSAWWEIPVLETEDPLDFLTIGNNQCPASDDWDKLLNAELYDMPRRSQANSESTPPEHTWSGTSELGNYHYSYNDISIGMDAMSMNNRNRDDGFSSSSSSSQTSEGSEWLPEETEFKPKKVVTSEPLSPTPPETETRRLTKVQRRSMTDQEVEQRRKEANKKNSKNYNFNKKSKEAKLKEDLEKNHLYIERATAQEKQTLERIMECYTYFGDGNVLVIHQDAMQNFTEKEVFEEKLEQVDMDVARAREQSQELKSLKKLYQKHRQAYITATNDKALKKSKINTYGSRKSRALHSMNIAELELKKCILQFKIKKFERREKLLEEVENQIKQYFNFKESNHAGYMRLPQERQNRFEELCKTLKTSSPKTSIAGSHRRSTRSSEN.

Disordered regions lie at residues 84-103 (RSQANSESTPPEHTWSGTSE) and 122-211 (SMNN…NKKS). The span at 85–103 (SQANSESTPPEHTWSGTSE) shows a compositional bias: polar residues. The span at 184 to 199 (SMTDQEVEQRRKEANK) shows a compositional bias: basic and acidic residues. 2 coiled-coil regions span residues 265-310 (TEKE…TATN) and 345-374 (LQFKIKKFERREKLLEEVENQIKQYFNFKE). The segment covering 399 to 408 (KTSSPKTSIA) has biased composition (polar residues). Residues 399 to 420 (KTSSPKTSIAGSHRRSTRSSEN) form a disordered region. Over residues 410 to 420 (SHRRSTRSSEN) the composition is skewed to basic residues.

This is an uncharacterized protein from Caenorhabditis elegans.